The following is a 317-amino-acid chain: tRNA dimethylallyltransferase (317 aa).

ATP is bound at residue 14–21; the sequence is GPTASGKS. 16–21 contacts substrate; that stretch reads TASGKS. Interaction with substrate tRNA stretches follow at residues 39–42 and 163–167; these read DSVL and QRIQR.

The protein belongs to the IPP transferase family. In terms of assembly, monomer. Requires Mg(2+) as cofactor.

The catalysed reaction is adenosine(37) in tRNA + dimethylallyl diphosphate = N(6)-dimethylallyladenosine(37) in tRNA + diphosphate. Catalyzes the transfer of a dimethylallyl group onto the adenine at position 37 in tRNAs that read codons beginning with uridine, leading to the formation of N6-(dimethylallyl)adenosine (i(6)A). This chain is tRNA dimethylallyltransferase, found in Xylella fastidiosa (strain 9a5c).